We begin with the raw amino-acid sequence, 339 residues long: Immunoglobulin-binding protein 1 (339 aa).

An N-acetylalanine modification is found at A2. The UIM domain occupies 46–60; it reads LDLLEKAAEMLSQLD. An interaction with PPP2CA region spans residues 98–202; it reads RLDHLQRARE…YLLHLQRWID (105 aa). Disordered regions lie at residues 221 to 243 and 289 to 339; these read RDSS…VKPF and APEE…QNMG. The segment at 225–290 is interaction with MID1; sequence REASTSNSSR…PDQGIAKAAP (66 aa). At K241 the chain carries N6-acetyllysine. A compositionally biased stretch (acidic residues) spans 301-312; that stretch reads EEQEEKEEEDDE. The span at 313–329 shows a compositional bias: basic and acidic residues; it reads QTLHRAREWDDWKDTHP.

The protein belongs to the IGBP1/TAP42 family. As to quaternary structure, interacts with partially folded PPP2CA, but not with the fully active protein. Interacts with PPP2CB, and with PP4 and PP6. Interacts with MID1 and MID2. Interacts with ubiquitin. Post-translationally, phosphorylated. Monoubiquitination by MID1 triggers calpain-mediated cleavage and switches IGBP1 activity from protective to destructive. Ubiquitously expressed with highest levels in heart, skeletal muscle and pancreas.

Its subcellular location is the cytoplasm. Its function is as follows. Associated to surface IgM-receptor; may be involved in signal transduction. Involved in regulation of the catalytic activity of the phosphatases PP2A, PP4 and PP6 by protecting their partially folded catalytic subunits from degradative polyubiquitination until they associate with regulatory subunits. The sequence is that of Immunoglobulin-binding protein 1 (IGBP1) from Homo sapiens (Human).